The primary structure comprises 382 residues: NADH-ubiquinone oxidoreductase chain 2 (382 aa).

The next 12 helical transmembrane spans lie at 1–21 (MIEL…LLSL), 33–53 (FICQ…FALC), 54–74 (ILTV…FLLL), 88–108 (LVSF…LCGL), 123–143 (LKFL…FSAM), 158–178 (FWIL…MWSV), 188–208 (LLLY…ASSW), 212–232 (FSVG…AYGQ), 239–259 (FAYS…TAGF), 260–280 (HTLY…WNLT), 284–304 (LFAL…FFGK), and 305–325 (AWIF…AALF).

The protein belongs to the complex I subunit 2 family.

Its subcellular location is the mitochondrion inner membrane. The enzyme catalyses a ubiquinone + NADH + 5 H(+)(in) = a ubiquinol + NAD(+) + 4 H(+)(out). In terms of biological role, core subunit of the mitochondrial membrane respiratory chain NADH dehydrogenase (Complex I) that is believed to belong to the minimal assembly required for catalysis. Complex I functions in the transfer of electrons from NADH to the respiratory chain. The immediate electron acceptor for the enzyme is believed to be ubiquinone. The sequence is that of NADH-ubiquinone oxidoreductase chain 2 (ND2) from Chlamydomonas reinhardtii (Chlamydomonas smithii).